A 119-amino-acid polypeptide reads, in one-letter code: FAD-linked sulfhydryl oxidase (119 aa).

One can recognise an ERV/ALR sulfhydryl oxidase domain in the interval 1 to 97 (MLHWGPKYWR…ISWSEYKNIY (97 aa)). Cys44 and Cys47 are disulfide-bonded.

Belongs to the asfivirus B119L family. As to quaternary structure, interacts with A151R. The cofactor is FAD.

It is found in the host cytoplasm. The protein resides in the virion. It carries out the reaction 2 R'C(R)SH + O2 = R'C(R)S-S(R)CR' + H2O2. Its function is as follows. FAD-dependent sulfhydryl oxidase that catalyzes the formation of disulfide bonds in viral proteins produced in the cell cytoplasm. Involved in virion maturation. In African swine fever virus (isolate Warthog/Namibia/Wart80/1980) (ASFV), this protein is FAD-linked sulfhydryl oxidase.